The primary structure comprises 279 residues: 3-methyl-2-oxobutanoate hydroxymethyltransferase (279 aa).

Mg(2+) is bound by residues aspartate 43 and aspartate 82. Residues 43-44 (DS), aspartate 82, and lysine 112 each bind 3-methyl-2-oxobutanoate. Position 114 (glutamate 114) interacts with Mg(2+). Catalysis depends on glutamate 181, which acts as the Proton acceptor.

Belongs to the PanB family. In terms of assembly, homodecamer; pentamer of dimers. It depends on Mg(2+) as a cofactor.

The protein resides in the cytoplasm. It catalyses the reaction 3-methyl-2-oxobutanoate + (6R)-5,10-methylene-5,6,7,8-tetrahydrofolate + H2O = 2-dehydropantoate + (6S)-5,6,7,8-tetrahydrofolate. It participates in cofactor biosynthesis; (R)-pantothenate biosynthesis; (R)-pantoate from 3-methyl-2-oxobutanoate: step 1/2. Its function is as follows. Catalyzes the reversible reaction in which hydroxymethyl group from 5,10-methylenetetrahydrofolate is transferred onto alpha-ketoisovalerate to form ketopantoate. In Shouchella clausii (strain KSM-K16) (Alkalihalobacillus clausii), this protein is 3-methyl-2-oxobutanoate hydroxymethyltransferase.